The following is a 223-amino-acid chain: MTINYANYIDHTLLAMDATEEQIIKLCEEAKQHHFYAVCVNSGYVPVAAQQLAGTSVKVCSVIGFPLGAGLTEAKAFEAQAAIKAGAQEIDMVINVGWLKSGKIAEVKADIKAVRDNCASTPLKVILETCLLSDAQIVQVCEMCRELDVAFVKTSTGFSTGGAKEEHVKLMRATVGQDMGVKASGAVRDRATAETMIKAGATRIGTSSGVAIVSGQQASASSY.

The active-site Proton donor/acceptor is the Asp-91. Lys-153 (schiff-base intermediate with acetaldehyde) is an active-site residue. Residue Lys-182 is the Proton donor/acceptor of the active site.

It belongs to the DeoC/FbaB aldolase family. DeoC type 1 subfamily.

It is found in the cytoplasm. The catalysed reaction is 2-deoxy-D-ribose 5-phosphate = D-glyceraldehyde 3-phosphate + acetaldehyde. It functions in the pathway carbohydrate degradation; 2-deoxy-D-ribose 1-phosphate degradation; D-glyceraldehyde 3-phosphate and acetaldehyde from 2-deoxy-alpha-D-ribose 1-phosphate: step 2/2. In terms of biological role, catalyzes a reversible aldol reaction between acetaldehyde and D-glyceraldehyde 3-phosphate to generate 2-deoxy-D-ribose 5-phosphate. The sequence is that of Deoxyribose-phosphate aldolase from Yersinia enterocolitica serotype O:8 / biotype 1B (strain NCTC 13174 / 8081).